The primary structure comprises 178 residues: Inner membrane-spanning protein YciB (178 aa).

The next 5 helical transmembrane spans lie at I10–M30, L47–A67, W76–L96, W121–W141, and L151–H171.

The protein belongs to the YciB family.

It localises to the cell inner membrane. Functionally, plays a role in cell envelope biogenesis, maintenance of cell envelope integrity and membrane homeostasis. The protein is Inner membrane-spanning protein YciB of Verminephrobacter eiseniae (strain EF01-2).